The chain runs to 534 residues: Glucomannan 4-beta-mannosyltransferase 2 (534 aa).

A helical membrane pass occupies residues Val36 to Leu56. Residue Asp136 is part of the active site. Residues Asp195 and Asp197 each contribute to the substrate site. Asp289 is an active-site residue. Helical transmembrane passes span Ile368 to Val388, Ile404 to Phe426, Leu483 to Val503, and Tyr509 to Gly529.

It belongs to the glycosyltransferase 2 family. Plant cellulose synthase-like A subfamily.

Its subcellular location is the golgi apparatus membrane. The enzyme catalyses GDP-mannose + (glucomannan)n = GDP + (glucomannan)n+1.. Possesses glucomannan synthase and mannan synthase activities in vitro. Mannan synthase consists of a 4-beta-mannosyltransferase activity on mannan using GDP-mannose. The beta-1,4-mannan product is the backbone for galactomannan synthesis by galactomannan galactosyltransferase. Galactomannan is a noncellulosic polysaccharides of plant cell wall. This is Glucomannan 4-beta-mannosyltransferase 2 from Arabidopsis thaliana (Mouse-ear cress).